Reading from the N-terminus, the 392-residue chain is 6-aminohexanoate-dimer hydrolase (392 aa).

The interval 1 to 22 (MNARSTGQHPARYPGAAAGEPT) is disordered. The active site involves S112.

It catalyses the reaction [N-(6-aminohexanoyl)](n) + H2O = [N-(6-aminohexanoyl)](n-1) + 6-aminohexanoate. It carries out the reaction N-(6-aminohexanoyl)-6-aminohexanoate + H2O = 2 6-aminohexanoate. Its pathway is xenobiotic degradation; nylon-6 oligomer degradation. Functionally, involved in nylon oligomer degradation. This Paenarthrobacter ureafaciens protein is 6-aminohexanoate-dimer hydrolase.